The chain runs to 408 residues: Serine/threonine transporter SstT (408 aa).

Transmembrane regions (helical) follow at residues 11–31 (LANG…VSLA), 43–63 (FLGS…VFIL), 82–102 (IVVL…VLSM), 141–161 (ALMT…GLAL), 192–212 (IGIF…AIAG), 216–236 (LLAV…PLIV), 290–310 (IPLG…VLTL), 316–336 (LGIQ…AISA), and 363–383 (VAMQ…AAET).

Belongs to the dicarboxylate/amino acid:cation symporter (DAACS) (TC 2.A.23) family.

Its subcellular location is the cell inner membrane. The catalysed reaction is L-serine(in) + Na(+)(in) = L-serine(out) + Na(+)(out). The enzyme catalyses L-threonine(in) + Na(+)(in) = L-threonine(out) + Na(+)(out). In terms of biological role, involved in the import of serine and threonine into the cell, with the concomitant import of sodium (symport system). In Shewanella sp. (strain ANA-3), this protein is Serine/threonine transporter SstT.